The primary structure comprises 501 residues: ATP synthase subunit alpha, chloroplastic (501 aa).

An ATP-binding site is contributed by 170–177; it reads GDRQTGKT.

The protein belongs to the ATPase alpha/beta chains family. In terms of assembly, F-type ATPases have 2 components, CF(1) - the catalytic core - and CF(0) - the membrane proton channel. CF(1) has five subunits: alpha(3), beta(3), gamma(1), delta(1), epsilon(1). CF(0) has four main subunits: a, b, b' and c.

It is found in the plastid. It localises to the chloroplast thylakoid membrane. It catalyses the reaction ATP + H2O + 4 H(+)(in) = ADP + phosphate + 5 H(+)(out). Functionally, produces ATP from ADP in the presence of a proton gradient across the membrane. The alpha chain is a regulatory subunit. The chain is ATP synthase subunit alpha, chloroplastic from Pisum sativum (Garden pea).